A 109-amino-acid polypeptide reads, in one-letter code: Resistin (109 aa).

The first 18 residues, 1–18, serve as a signal peptide directing secretion; the sequence is MKALSFLFIPVLGLLVCG. 5 cysteine pairs are disulfide-bonded: Cys-51/Cys-104, Cys-63/Cys-103, Cys-72/Cys-89, Cys-74/Cys-91, and Cys-78/Cys-93.

It belongs to the resistin/FIZZ family. As to quaternary structure, homodimer; disulfide-linked.

It is found in the secreted. Functionally, hormone that seems to suppress insulin ability to stimulate glucose uptake into adipose cells. Potentially links obesity to diabetes. This chain is Resistin (RETN), found in Bos taurus (Bovine).